The following is a 504-amino-acid chain: MGRFAATLVGSLFGLGLLLCGLGRLASAEPRAPPEKIAIVGAGIGGTSSAYYLRKKFGKDVKIDVFEREEIGGRLATLKVQGHDYEAGGSVIHPLNLHMKRFVKELGLSSVPASGGLVGVYNGKSLVFEESSWFIINVIKLVWRYGFQSLRMHMWVEDLLDKFMRIYRYQSHDYAFSSVEKLMYAIGGDDYVRLLNQTLRENLKKAGFSETFLNEMIAPVMKVNFGQSTDLNAFVGAVSMTAADSNLWAVEGGNKVVCSGLLQASNSNLISGSVMSIEKTRTKQTGTPPKMYEVVYKTGSEIHSDFYDIVLVAAPLNRKMSNITFRNFDPPIEEFNDPYQQLVTTLIKGELNSTLFSSRHKDQFGLSAILVTDDSDMFINSLSIVASVSHKEGPPPAVDGMHVWKTFSKDILTKEQISKLFLSYDYAVRKPWLSYPYYNPPQKCPSIILHDRLYYLNGIEFAASCMEMSAIAGYNAALLAYHRWNGNEDMIDQDDLYEKLKTEL.

The signal sequence occupies residues methionine 1–alanine 28. Residues asparagine 196, asparagine 322, and asparagine 352 are each glycosylated (N-linked (GlcNAc...) asparagine).

It belongs to the prenylcysteine oxidase family. The cofactor is FAD. Expressed mainly in cerebrum.

Its subcellular location is the lysosome. The enzyme catalyses an S-polyprenyl-L-cysteine + O2 + H2O = a polyprenal + L-cysteine + H2O2. The catalysed reaction is S-(2E,6E)-farnesyl-L-cysteine + O2 + H2O = (2E,6E)-farnesal + L-cysteine + H2O2. It carries out the reaction [(2E,6E,10E)-geranylgeranyl]-L-cysteine + O2 + H2O = (2E,6E,10E)-geranylgeranial + L-cysteine + H2O2. In terms of biological role, prenylcysteine oxidase that cleaves the thioether bond of prenyl-L-cysteines, such as farnesylcysteine and geranylgeranylcysteine. Only active against free prenylcysteines and not prenylcysteine residues within prenylated proteins or peptides. Involved in the final step in the degradation of prenylated proteins, by degrading prenylcysteines after the protein has been degraded. This Rattus norvegicus (Rat) protein is Prenylcysteine oxidase 1.